The following is a 157-amino-acid chain: uncharacterized protein (157 aa).

The first 19 residues, 1–19 (MRKYLIILVLLLFLSSSFG), serve as a signal peptide directing secretion.

This is an uncharacterized protein from Methanocaldococcus jannaschii (strain ATCC 43067 / DSM 2661 / JAL-1 / JCM 10045 / NBRC 100440) (Methanococcus jannaschii).